The following is a 171-amino-acid chain: Putative charged multivesicular body protein 4B-like protein CHMP4BP1 (171 aa).

Basic and acidic residues predominate over residues 1 to 17; that stretch reads MLSKKQEFLEKKIEQRH. Disordered stretches follow at residues 1–24 and 132–171; these read MLSKKQEFLEKKIEQRHGTKNKPA and EQEEPDKNLLEVSGPETVPLPNVPSIALPSKPAKKRKTTT.

It belongs to the SNF7 family.

This Homo sapiens (Human) protein is Putative charged multivesicular body protein 4B-like protein CHMP4BP1 (CHMP4BP1).